Consider the following 802-residue polypeptide: Ribosomal protein S6 kinase alpha-5 (802 aa).

Over residues 1–22 the composition is skewed to gly residues; it reads MEEEGGSSGGAAGTSADGGDGG. The interval 1-23 is disordered; it reads MEEEGGSSGGAAGTSADGGDGGE. The 270-residue stretch at 49–318 folds into the Protein kinase 1 domain; it reads FELLKVLGTG…ADEIKEHLFF (270 aa). Residues 55–63 and Lys-81 contribute to the ATP site; that span reads LGTGAYGKV. Asp-177 acts as the Proton acceptor in catalysis. Ser-212 carries the phosphoserine; by autocatalysis modification. The 69-residue stretch at 319-387 folds into the AGC-kinase C-terminal domain; it reads QKINWDDLAA…VAPSILFKRN (69 aa). Position 360 is a phosphoserine; by MAPK1, MAPK3 and MAPK14 (Ser-360). 2 positions are modified to phosphoserine; by autocatalysis: Ser-376 and Ser-381. Residues 426–687 form the Protein kinase 2 domain; it reads DLKDKPLGEG…MSGLRYNEWL (262 aa). ATP is bound by residues 432–440 and Lys-455; that span reads LGEGSFSIC. The active-site Proton acceptor is the Asp-544. At Thr-581 the chain carries Phosphothreonine; by MAPK1, MAPK3 and MAPK14. Ser-647, Ser-657, Ser-691, and Ser-695 each carry phosphoserine. Thr-700 is subject to Phosphothreonine; by MAPK1, MAPK3 and MAPK14. Positions 741–802 are disordered; that stretch reads AKRRKMKKTS…TLFQFSDSVA (62 aa). The segment covering 749–779 has biased composition (low complexity); sequence TSTSTETRSSSSESSHSSSSHSHGKTTPTKT. A phosphoserine; by autocatalysis mark is found at Ser-750, Ser-752, and Ser-758. Residues 780–802 are compositionally biased toward polar residues; sequence LQPSNPADSNNPETLFQFSDSVA. The residue at position 798 (Ser-798) is a Phosphoserine.

Belongs to the protein kinase superfamily. AGC Ser/Thr protein kinase family. S6 kinase subfamily. As to quaternary structure, forms a complex with either MAPK1/ERK2 or MAPK3/ERK1 in quiescent cells which transiently dissociates following mitogenic stimulation. Also associates with MAPK14/p38-alpha. Activated RPS6KA5 associates with and phosphorylates the NF-kappa-B p65 subunit RELA. Interacts with CREBBP and EP300. The cofactor is Mg(2+). Ser-376 and Thr-581 phosphorylation is required for kinase activity. Ser-376 and Ser-212 are autophosphorylated by the C-terminal kinase domain, and their phosphorylation is essential for the catalytic activity of the N-terminal kinase domain. Phosphorylated at Ser-360, Thr-581 and Thr-700 by MAPK1/ERK2, MAPK3/ERK1 and MAPK14/p38-alpha. Autophosphorylated at Ser-750, Ser-752 and Ser-758 by the N-terminal kinase domain. In terms of processing, ubiquitinated. Widely expressed with high levels in heart, brain and placenta. Less abundant in lung, kidney and liver.

Its subcellular location is the nucleus. The protein localises to the cytoplasm. The catalysed reaction is L-seryl-[protein] + ATP = O-phospho-L-seryl-[protein] + ADP + H(+). It catalyses the reaction L-threonyl-[protein] + ATP = O-phospho-L-threonyl-[protein] + ADP + H(+). With respect to regulation, activated by phosphorylation at Ser-360, Thr-581 and Thr-700 by MAPK1/ERK2, MAPK3/ERK1 and MAPK14/p38-alpha, and by further autophosphorylation of Ser-212, Ser-376 and Ser-381 by the activated C-terminal kinase domain. The active N-terminal kinase domain finally phosphorylates downstream substrates, as well as Ser-750, Ser-752 and Ser-758 in its own C-terminal region. Serine/threonine-protein kinase that is required for the mitogen or stress-induced phosphorylation of the transcription factors CREB1 and ATF1 and for the regulation of the transcription factors RELA, STAT3 and ETV1/ER81, and that contributes to gene activation by histone phosphorylation and functions in the regulation of inflammatory genes. Phosphorylates CREB1 and ATF1 in response to mitogenic or stress stimuli such as UV-C irradiation, epidermal growth factor (EGF) and anisomycin. Plays an essential role in the control of RELA transcriptional activity in response to TNF and upon glucocorticoid, associates in the cytoplasm with the glucocorticoid receptor NR3C1 and contributes to RELA inhibition and repression of inflammatory gene expression. In skeletal myoblasts is required for phosphorylation of RELA at 'Ser-276' during oxidative stress. In erythropoietin-stimulated cells, is necessary for the 'Ser-727' phosphorylation of STAT3 and regulation of its transcriptional potential. Phosphorylates ETV1/ER81 at 'Ser-191' and 'Ser-216', and thereby regulates its ability to stimulate transcription, which may be important during development and breast tumor formation. Directly represses transcription via phosphorylation of 'Ser-1' of histone H2A. Phosphorylates 'Ser-10' of histone H3 in response to mitogenics, stress stimuli and EGF, which results in the transcriptional activation of several immediate early genes, including proto-oncogenes c-fos/FOS and c-jun/JUN. May also phosphorylate 'Ser-28' of histone H3. Mediates the mitogen- and stress-induced phosphorylation of high mobility group protein 1 (HMGN1/HMG14). In lipopolysaccharide-stimulated primary macrophages, acts downstream of the Toll-like receptor TLR4 to limit the production of pro-inflammatory cytokines. Functions probably by inducing transcription of the MAP kinase phosphatase DUSP1 and the anti-inflammatory cytokine interleukin 10 (IL10), via CREB1 and ATF1 transcription factors. Plays a role in neuronal cell death by mediating the downstream effects of excitotoxic injury. Phosphorylates TRIM7 at 'Ser-107' in response to growth factor signaling via the MEK/ERK pathway, thereby stimulating its ubiquitin ligase activity. The sequence is that of Ribosomal protein S6 kinase alpha-5 (RPS6KA5) from Homo sapiens (Human).